We begin with the raw amino-acid sequence, 63 residues long: MKVNDRVTVKTDGGPRREGVVLEVEEFSEGVMYLVSLADYPAGVWFFNEVDSQDGTFVGPLSQ.

The protein belongs to the DsrB family.

The polypeptide is Protein DsrB (Yersinia pseudotuberculosis serotype O:3 (strain YPIII)).